The chain runs to 352 residues: rRNA 2'-O-methyltransferase fibrillarin (352 aa).

Residues methionine 1–lysine 115 form a disordered region. An asymmetric dimethylarginine mark is found at arginine 8, arginine 16, arginine 19, arginine 23, arginine 27, arginine 35, arginine 43, arginine 51, arginine 55, arginine 58, arginine 63, arginine 67, arginine 70, arginine 75, arginine 81, arginine 85, arginine 91, arginine 95, arginine 98, arginine 102, arginine 105, and arginine 112. Over residues arginine 8–glycine 18 the composition is skewed to gly residues. Residues serine 26–glycine 59 show a composition bias toward gly residues. The segment covering phenylalanine 66 to glycine 113 has biased composition (gly residues). Residues threonine 203–threonine 204, glutamate 222–phenylalanine 223, aspartate 247–alanine 248, and aspartate 267–glutamine 270 each bind S-adenosyl-L-methionine.

It belongs to the methyltransferase superfamily. Fibrillarin family. As to quaternary structure, component of box C/D small nucleolar ribonucleoprotein (snoRNP) particles. It is associated with the U3, U8 and U13 small nuclear RNAs. By homology to other fibrillarins, some or all of the N-terminal domain arginines are modified to asymmetric dimethylarginine (DMA).

It localises to the nucleus. It is found in the nucleolus. The protein localises to the nucleoplasm. It carries out the reaction L-glutaminyl-[histone H2A] + S-adenosyl-L-methionine = N(5)-methyl-L-glutaminyl-[histone H2A] + S-adenosyl-L-homocysteine + H(+). In terms of biological role, S-adenosyl-L-methionine-dependent methyltransferase that has the ability to methylate both RNAs and proteins. Involved in pre-rRNA processing. Utilizes the methyl donor S-adenosyl-L-methionine to catalyze the site-specific 2'-hydroxyl methylation of ribose moieties in pre-ribosomal RNA. Site specificity is provided by a guide RNA that base pairs with the substrate. Methylation occurs at a characteristic distance from the sequence involved in base pairing with the guide RNA. Also acts as a protein methyltransferase by mediating methylation of 'Gln-105' of histone H2A (H2AQ105me), a modification that impairs binding of the FACT complex and is specifically present at 35S ribosomal DNA locus. Plays a role in modulation of nucleolus size most likely through regulating the ribosomal RNA (rRNA) pool. This is rRNA 2'-O-methyltransferase fibrillarin from Caenorhabditis elegans.